Consider the following 136-residue polypeptide: Small ribosomal subunit protein uS8c (136 aa).

The protein belongs to the universal ribosomal protein uS8 family. Part of the 30S ribosomal subunit.

It is found in the plastid. It localises to the chloroplast. Its function is as follows. One of the primary rRNA binding proteins, it binds directly to 16S rRNA central domain where it helps coordinate assembly of the platform of the 30S subunit. This chain is Small ribosomal subunit protein uS8c (rps8), found in Agrostis stolonifera (Creeping bentgrass).